A 314-amino-acid chain; its full sequence is DNA-directed RNA polymerase subunit alpha (314 aa).

An alpha N-terminal domain (alpha-NTD) region spans residues M1–T228. The tract at residues K245 to D314 is alpha C-terminal domain (alpha-CTD).

The protein belongs to the RNA polymerase alpha chain family. In terms of assembly, homodimer. The RNAP catalytic core consists of 2 alpha, 1 beta, 1 beta' and 1 omega subunit. When a sigma factor is associated with the core the holoenzyme is formed, which can initiate transcription.

It catalyses the reaction RNA(n) + a ribonucleoside 5'-triphosphate = RNA(n+1) + diphosphate. Its function is as follows. DNA-dependent RNA polymerase catalyzes the transcription of DNA into RNA using the four ribonucleoside triphosphates as substrates. This Staphylococcus haemolyticus (strain JCSC1435) protein is DNA-directed RNA polymerase subunit alpha.